Reading from the N-terminus, the 427-residue chain is Light-independent protochlorophyllide reductase subunit N (427 aa).

[4Fe-4S] cluster is bound by residues C29, C54, and C115.

This sequence belongs to the BchN/ChlN family. In terms of assembly, protochlorophyllide reductase is composed of three subunits; BchL, BchN and BchB. Forms a heterotetramer of two BchB and two BchN subunits. It depends on [4Fe-4S] cluster as a cofactor.

The enzyme catalyses chlorophyllide a + oxidized 2[4Fe-4S]-[ferredoxin] + 2 ADP + 2 phosphate = protochlorophyllide a + reduced 2[4Fe-4S]-[ferredoxin] + 2 ATP + 2 H2O. It functions in the pathway porphyrin-containing compound metabolism; bacteriochlorophyll biosynthesis (light-independent). Component of the dark-operative protochlorophyllide reductase (DPOR) that uses Mg-ATP and reduced ferredoxin to reduce ring D of protochlorophyllide (Pchlide) to form chlorophyllide a (Chlide). This reaction is light-independent. The NB-protein (BchN-BchB) is the catalytic component of the complex. This chain is Light-independent protochlorophyllide reductase subunit N, found in Bradyrhizobium sp. (strain ORS 278).